We begin with the raw amino-acid sequence, 349 residues long: Protein disulfide isomerase Creld2 (349 aa).

An N-terminal signal peptide occupies residues 1–22; that stretch reads MHLLLAAGFGLLLLLLPPPAAS. The CXXC signature appears at 28–31; sequence CQRC. 4 cysteine pairs are disulfide-bonded: Cys28–Cys31, Cys137–Cys151, Cys145–Cys163, and Cys165–Cys174. The region spanning 133–175 is the EGF-like 1 domain; it reads DCKECQGGSERPCSGNGYCSGDGSRQGDGSCQCHAGYKGPLCI. N-linked (GlcNAc...) asparagine glycosylation is present at Asn187. Residues 190-237 form an FU 1 repeat; that stretch reads HSICLACDESCKTCSGPSNKDCVQCEVGWARVEDACVDVDECAAETPP. Asn248 carries an N-linked (GlcNAc...) asparagine glycan. The FU 2 repeat unit spans residues 250 to 297; it reads SYICEECDSTCVGCTGKGPANCKECIAGYTKQSGQCADIDECSLEEKA. A CXXC motif is present at residues 260–263; the sequence is CVGC. Disulfide bonds link Cys260–Cys263, Cys291–Cys305, Cys298–Cys314, and Cys316–Cys327. In terms of domain architecture, EGF-like 2; calcium-binding spans 287 to 328; it reads DIDECSLEEKACKRRNENCYNVPGSFVCVCPDGFEETEDACV.

The protein belongs to the CRELD family. In terms of assembly, interacts with Chrna4. Component of a complex containing at least Creld2, Manf, Matn3 and Pdia4. Broadly expressed in brain (at protein level).

The protein localises to the endoplasmic reticulum. The catalysed reaction is Catalyzes the rearrangement of -S-S- bonds in proteins.. In terms of biological role, protein disulfide isomerase. Might play a role in the unfolded protein response. May regulate transport of alpha4-beta2 neuronal acetylcholine receptor. The protein is Protein disulfide isomerase Creld2 (Creld2) of Rattus norvegicus (Rat).